Here is a 69-residue protein sequence, read N- to C-terminus: Bowman-Birk type proteinase inhibitor A2 (69 aa).

Disulfide bonds link C12–C31, C18–C29, C38–C45, and C42–C59.

It belongs to the Bowman-Birk serine protease inhibitor family. Expressed in bulb (at protein level).

Its function is as follows. Serine protease inhibitor. The chain is Bowman-Birk type proteinase inhibitor A2 from Hyacinthus orientalis (Common hyacinth).